The sequence spans 221 residues: Putative NAD(P)H nitroreductase YfkO (221 aa).

Residues 15-17 (RHA) and 73-75 (QKQ) contribute to the FMN site. An NAD(+)-binding site is contributed by 157 to 162 (AAAQIG). FMN-binding positions include 169 to 170 (EG) and arginine 211.

The protein belongs to the nitroreductase family. In terms of assembly, monomer. The cofactor is FMN.

In Bacillus subtilis (strain 168), this protein is Putative NAD(P)H nitroreductase YfkO (yfkO).